Consider the following 124-residue polypeptide: Succinate dehydrogenase cytochrome b556 subunit (124 aa).

The Cytoplasmic portion of the chain corresponds to 1–29 (MTKTKQEIYNKRPTSPHLTIYKPQISSTL). Residues 30–55 (SILYRMTGVALFFAVSILVWWLILSK) traverse the membrane as a helical segment. Topologically, residues 56-67 (YDNNYLQLAECC) are periplasmic. Residues 68-88 (IIKICLVAVSYAWFYHLCNGI) form a helical membrane-spanning segment. His-83 serves as a coordination point for heme. Residues 89–103 (RHLFWDIGYGFSIKL) are Cytoplasmic-facing. The chain crosses the membrane as a helical span at residues 104 to 124 (VNITGWCVVVGSVLLTVLLWV).

It belongs to the cytochrome b560 family. As to quaternary structure, part of an enzyme complex containing four subunits: a flavoprotein, an iron-sulfur protein, plus two membrane-anchoring proteins, SdhC and SdhD. The complex can form homotrimers. The cofactor is heme.

Its subcellular location is the cell inner membrane. Its pathway is carbohydrate metabolism; tricarboxylic acid cycle. Membrane-anchoring subunit of succinate dehydrogenase (SDH). In Rickettsia conorii (strain ATCC VR-613 / Malish 7), this protein is Succinate dehydrogenase cytochrome b556 subunit (sdhC).